The sequence spans 718 residues: ATP-dependent RNA helicase homolog DQX1 (718 aa).

A Helicase ATP-binding domain is found at 54–222; the sequence is HLESSPTGVV…WGNSPIVRVP (169 aa). ATP is bound at residue 67–74; the sequence is GDPGSGKS. Positions 167–170 match the DEAQ box motif; it reads DEAQ. A Helicase C-terminal domain is found at 245-447; it reads ACQAVLELCQ…ALMRALEDLD (203 aa). Positions 690–718 are disordered; sequence QLREGTAEPPAAATETSSPQEYGDGCVLQ. A compositionally biased stretch (low complexity) spans 696–708; sequence AEPPAAATETSSP.

In terms of tissue distribution, ubiquitous.

The protein resides in the nucleus. Its function is as follows. Might be involved in RNA metabolism; it is missing helicase motif III and may not have helicase activity. The polypeptide is ATP-dependent RNA helicase homolog DQX1 (Dqx1) (Mus musculus (Mouse)).